Here is a 259-residue protein sequence, read N- to C-terminus: tRNA pseudouridine synthase A (259 aa).

Catalysis depends on aspartate 52, which acts as the Nucleophile. Tyrosine 111 contacts substrate.

It belongs to the tRNA pseudouridine synthase TruA family. In terms of assembly, homodimer.

The catalysed reaction is uridine(38/39/40) in tRNA = pseudouridine(38/39/40) in tRNA. Its function is as follows. Formation of pseudouridine at positions 38, 39 and 40 in the anticodon stem and loop of transfer RNAs. The polypeptide is tRNA pseudouridine synthase A (Ruegeria sp. (strain TM1040) (Silicibacter sp.)).